We begin with the raw amino-acid sequence, 423 residues long: Anhydromevalonate phosphate decarboxylase (423 aa).

Residues asparagine 134 and glutamate 197 each contribute to the Mn(2+) site. The active-site Proton acceptor is the aspartate 245.

It belongs to the UbiD family. The cofactor is prenylated FMN. It depends on Mn(2+) as a cofactor.

It catalyses the reaction (2E)-3-methyl-5-phosphooxypent-2-enoate + H(+) = isopentenyl phosphate + CO2. The protein operates within isoprenoid biosynthesis; isopentenyl diphosphate biosynthesis via mevalonate pathway. In terms of biological role, catalyzes the conversion of trans-anhydromevalonate 5-phosphate (tAHMP) into isopentenyl phosphate. Involved in the archaeal mevalonate (MVA) pathway, which provides fundamental precursors for isoprenoid biosynthesis, such as isopentenyl diphosphate (IPP) and dimethylallyl diphosphate (DMAPP). This chain is Anhydromevalonate phosphate decarboxylase, found in Methanothermobacter thermautotrophicus (strain ATCC 29096 / DSM 1053 / JCM 10044 / NBRC 100330 / Delta H) (Methanobacterium thermoautotrophicum).